The chain runs to 125 residues: Multifunctional methyltransferase subunit TRM112-like protein (125 aa).

The TRM112 domain occupies 2 to 121; the sequence is KLFVHNFMSS…RDGIPNMLKV (120 aa).

It belongs to the TRM112 family.

The protein resides in the nucleus. The protein localises to the nucleoplasm. It localises to the cytoplasm. It is found in the perinuclear region. Its function is as follows. Acts as an activator of both RNA and protein methyltransferases. The sequence is that of Multifunctional methyltransferase subunit TRM112-like protein from Caenorhabditis elegans.